A 379-amino-acid chain; its full sequence is UDP-4-amino-4-deoxy-L-arabinose--oxoglutarate aminotransferase (379 aa).

Position 182 is an N6-(pyridoxal phosphate)lysine (Lys-182).

This sequence belongs to the DegT/DnrJ/EryC1 family. ArnB subfamily. Homodimer. It depends on pyridoxal 5'-phosphate as a cofactor.

It carries out the reaction UDP-4-amino-4-deoxy-beta-L-arabinose + 2-oxoglutarate = UDP-beta-L-threo-pentopyranos-4-ulose + L-glutamate. It participates in nucleotide-sugar biosynthesis; UDP-4-deoxy-4-formamido-beta-L-arabinose biosynthesis; UDP-4-deoxy-4-formamido-beta-L-arabinose from UDP-alpha-D-glucuronate: step 2/3. The protein operates within bacterial outer membrane biogenesis; lipopolysaccharide biosynthesis. Its function is as follows. Catalyzes the conversion of UDP-4-keto-arabinose (UDP-Ara4O) to UDP-4-amino-4-deoxy-L-arabinose (UDP-L-Ara4N). The modified arabinose is attached to lipid A and is required for resistance to polymyxin and cationic antimicrobial peptides. The protein is UDP-4-amino-4-deoxy-L-arabinose--oxoglutarate aminotransferase of Escherichia coli O1:K1 / APEC.